A 554-amino-acid polypeptide reads, in one-letter code: NADH-ubiquinone oxidoreductase chain 5 (554 aa).

Transmembrane regions (helical) follow at residues 6–26, 57–77, 93–113, 150–170, 175–197, 209–228, 238–258, 263–283, 286–306, 332–352, 379–399, 409–429, 441–461, 480–500, and 532–552; these read VCGI…LYLL, LMFI…SISY, ILFL…SIIL, IGLL…LSFY, FMMI…STWL, SLVH…IRYV, YIML…NFEL, VVAY…SIGS, LVFL…MCVG, SMIL…VGYY, IFTV…FLMM, IMCI…KLIF, LLMI…IMGF, FLFM…MMFT, and LMIN…IYLI.

Belongs to the complex I subunit 5 family.

Its subcellular location is the mitochondrion inner membrane. It carries out the reaction a ubiquinone + NADH + 5 H(+)(in) = a ubiquinol + NAD(+) + 4 H(+)(out). Core subunit of the mitochondrial membrane respiratory chain NADH dehydrogenase (Complex I) that is believed to belong to the minimal assembly required for catalysis. Complex I functions in the transfer of electrons from NADH to the respiratory chain. The immediate electron acceptor for the enzyme is believed to be ubiquinone. The chain is NADH-ubiquinone oxidoreductase chain 5 (ND5) from Apis mellifera ligustica (Common honeybee).